The following is a 116-amino-acid chain: Large ribosomal subunit protein bL19 (116 aa).

It belongs to the bacterial ribosomal protein bL19 family.

Functionally, this protein is located at the 30S-50S ribosomal subunit interface and may play a role in the structure and function of the aminoacyl-tRNA binding site. This is Large ribosomal subunit protein bL19 from Pseudomonas entomophila (strain L48).